The chain runs to 910 residues: Inactive disease susceptibility protein LOV1 (910 aa).

Positions 22–60 (ARLNGIGEQVDGLKRQLGRLQSLLKDADAKKHESERVRN) form a coiled coil. Positions 169–461 (EQSVEALAGH…AAEGIITSSD (293 aa)) constitute an NB-ARC domain. 3 LRR repeats span residues 584 to 609 (LPLLRVLDLSRVKFEGGKLPSSIGDL), 610 to 632 (IHLRFLSLHRAWISHLPSSLRNL), and 634 to 655 (LLLYLNLGFNGMVHVPNVLKEM).

Belongs to the disease resistance NB-LRR family. RPP8/HRT subfamily.

This Arabidopsis thaliana (Mouse-ear cress) protein is Inactive disease susceptibility protein LOV1 (LOV1).